We begin with the raw amino-acid sequence, 320 residues long: Cytochrome f (320 aa).

A signal peptide spans 1–35 (MQTRNTFSWIKEQITRSISASLMIYIITRTSISNA). 4 residues coordinate heme: Tyr-36, Cys-56, Cys-59, and His-60. Residues 286 to 306 (VQGLLFFFAAVILAQIFLVLK) form a helical membrane-spanning segment.

It belongs to the cytochrome f family. In terms of assembly, the 4 large subunits of the cytochrome b6-f complex are cytochrome b6, subunit IV (17 kDa polypeptide, petD), cytochrome f and the Rieske protein, while the 4 small subunits are PetG, PetL, PetM and PetN. The complex functions as a dimer. Heme is required as a cofactor.

Its subcellular location is the plastid. It is found in the chloroplast thylakoid membrane. Functionally, component of the cytochrome b6-f complex, which mediates electron transfer between photosystem II (PSII) and photosystem I (PSI), cyclic electron flow around PSI, and state transitions. This Helianthus annuus (Common sunflower) protein is Cytochrome f.